The sequence spans 356 residues: Putative ankyrin repeat protein R599 (356 aa).

ANK repeat units lie at residues 111 to 143, 152 to 182, 183 to 213, 215 to 238, 239 to 266, and 267 to 298; these read NDDILLCTAIINCSSECLLYLLDKGIPIDFCDN, RLEKYIYTTRKNKSSCDMLKIVIDRGGNVNT, HNYEPLYSAVNDNNFDKIKLLVENGANKLSD, KRKITNTNLEIFQYLIDNRVELEV, NFDDIFLQSIINDDSECMKLFIELGANI, and NSIPTLELTKIIINARHEILEILINYGLDINN.

The sequence is that of Putative ankyrin repeat protein R599 from Acanthamoeba polyphaga (Amoeba).